The chain runs to 225 residues: Glycerol-3-phosphate acyltransferase (225 aa).

6 consecutive transmembrane segments (helical) span residues 1–21 (MAIWLLCNGVLLIVAYFLGSF), 56–76 (GPGLATLGVDICKGAGAVALV), 95–115 (IGLWLSLVVIMAGLMAILGHS), 134–154 (VLLVMSWTVGLAALGIFALVV), 159–178 (IVSLSSISAAISLPVLMFVA), and 182–201 (LAYVLFSITAGVYVVWRHWA).

Belongs to the PlsY family. Probably interacts with PlsX.

The protein resides in the cell inner membrane. It catalyses the reaction an acyl phosphate + sn-glycerol 3-phosphate = a 1-acyl-sn-glycero-3-phosphate + phosphate. It functions in the pathway lipid metabolism; phospholipid metabolism. Catalyzes the transfer of an acyl group from acyl-phosphate (acyl-PO(4)) to glycerol-3-phosphate (G3P) to form lysophosphatidic acid (LPA). This enzyme utilizes acyl-phosphate as fatty acyl donor, but not acyl-CoA or acyl-ACP. The protein is Glycerol-3-phosphate acyltransferase of Acaryochloris marina (strain MBIC 11017).